A 185-amino-acid chain; its full sequence is ATP-dependent protease subunit HslV (185 aa).

The active site involves T2. Na(+)-binding residues include G157, C160, and T163.

This sequence belongs to the peptidase T1B family. HslV subfamily. As to quaternary structure, a double ring-shaped homohexamer of HslV is capped on each side by a ring-shaped HslU homohexamer. The assembly of the HslU/HslV complex is dependent on binding of ATP.

The protein localises to the cytoplasm. It catalyses the reaction ATP-dependent cleavage of peptide bonds with broad specificity.. Allosterically activated by HslU binding. Its function is as follows. Protease subunit of a proteasome-like degradation complex believed to be a general protein degrading machinery. The sequence is that of ATP-dependent protease subunit HslV from Idiomarina loihiensis (strain ATCC BAA-735 / DSM 15497 / L2-TR).